A 680-amino-acid chain; its full sequence is DNA-directed RNA polymerase subunit beta' (680 aa).

Zn(2+)-binding residues include cysteine 69, cysteine 71, cysteine 87, and cysteine 90. Residues aspartate 489, aspartate 491, and aspartate 493 each contribute to the Mg(2+) site.

Belongs to the RNA polymerase beta' chain family. RpoC1 subfamily. In plastids the minimal PEP RNA polymerase catalytic core is composed of four subunits: alpha, beta, beta', and beta''. When a (nuclear-encoded) sigma factor is associated with the core the holoenzyme is formed, which can initiate transcription. The cofactor is Mg(2+). Requires Zn(2+) as cofactor.

It localises to the plastid. The protein resides in the chloroplast. The catalysed reaction is RNA(n) + a ribonucleoside 5'-triphosphate = RNA(n+1) + diphosphate. Functionally, DNA-dependent RNA polymerase catalyzes the transcription of DNA into RNA using the four ribonucleoside triphosphates as substrates. In Draba nemorosa (Woodland whitlowgrass), this protein is DNA-directed RNA polymerase subunit beta'.